The sequence spans 101 residues: Aspartyl/glutamyl-tRNA(Asn/Gln) amidotransferase subunit C (101 aa).

Belongs to the GatC family. As to quaternary structure, heterotrimer of A, B and C subunits.

The catalysed reaction is L-glutamyl-tRNA(Gln) + L-glutamine + ATP + H2O = L-glutaminyl-tRNA(Gln) + L-glutamate + ADP + phosphate + H(+). The enzyme catalyses L-aspartyl-tRNA(Asn) + L-glutamine + ATP + H2O = L-asparaginyl-tRNA(Asn) + L-glutamate + ADP + phosphate + 2 H(+). Allows the formation of correctly charged Asn-tRNA(Asn) or Gln-tRNA(Gln) through the transamidation of misacylated Asp-tRNA(Asn) or Glu-tRNA(Gln) in organisms which lack either or both of asparaginyl-tRNA or glutaminyl-tRNA synthetases. The reaction takes place in the presence of glutamine and ATP through an activated phospho-Asp-tRNA(Asn) or phospho-Glu-tRNA(Gln). The sequence is that of Aspartyl/glutamyl-tRNA(Asn/Gln) amidotransferase subunit C from Lactobacillus delbrueckii subsp. bulgaricus (strain ATCC 11842 / DSM 20081 / BCRC 10696 / JCM 1002 / NBRC 13953 / NCIMB 11778 / NCTC 12712 / WDCM 00102 / Lb 14).